Consider the following 231-residue polypeptide: Large ribosomal subunit protein uL1 (231 aa).

The protein belongs to the universal ribosomal protein uL1 family. In terms of assembly, part of the 50S ribosomal subunit.

Binds directly to 23S rRNA. The L1 stalk is quite mobile in the ribosome, and is involved in E site tRNA release. In terms of biological role, protein L1 is also a translational repressor protein, it controls the translation of the L11 operon by binding to its mRNA. The sequence is that of Large ribosomal subunit protein uL1 from Pseudomonas fluorescens (strain Pf0-1).